Here is a 609-residue protein sequence, read N- to C-terminus: Alpha-glycerophosphate oxidase (609 aa).

21–49 (DLLVIGGGITGAGLTLQAAAAGMKVAVLE) is an FAD binding site.

It belongs to the FAD-dependent glycerol-3-phosphate dehydrogenase family. FAD serves as cofactor.

The protein resides in the cytoplasm. The catalysed reaction is sn-glycerol 3-phosphate + O2 = dihydroxyacetone phosphate + H2O2. This Lactococcus lactis subsp. lactis (strain IL1403) (Streptococcus lactis) protein is Alpha-glycerophosphate oxidase (glpO).